The sequence spans 895 residues: Zyg eleven-related protein 1 (895 aa).

Disordered regions lie at residues 58-78 (HGPA…PDQG) and 195-221 (RGQM…SDHQ). Residues 205–220 (SPLSPSSQPSSIQSDH) show a composition bias toward low complexity.

In terms of assembly, interacts with elc-1. Part of an E3 ubiquitin ligase complex including zer-11, cul-2 and elc-1.

Acts as a target recruitment subunit in the E3 ubiquitin ligase complex zer-1-cul-2-elc-1. The sequence is that of Zyg eleven-related protein 1 (zer-1) from Caenorhabditis elegans.